Here is a 190-residue protein sequence, read N- to C-terminus: Bifunctional D-Ala-D-Ala dipeptidase and D-Ala-D-Ala carboxypeptidase VanXYC (190 aa).

Glu66 lines the Mg(2+) pocket. A dipeptide contacts are provided by Gln67, Ala88, Ser93, His95, and Asp102. His95 and Asp102 together coordinate Cu(2+). Residues His95 and Asp102 each contribute to the Zn(2+) site. Catalysis depends on Glu153, which acts as the catalytic acid/base residue. A dipeptide is bound by residues Trp155 and His156. His156 is a binding site for Cu(2+). His156 is a binding site for Zn(2+).

This sequence belongs to the peptidase M15D family. Homodimer.

The protein resides in the cytoplasm. The enzyme catalyses D-alanyl-D-alanine + H2O = 2 D-alanine. It catalyses the reaction UDP-N-acetyl-alpha-D-muramoyl-L-alanyl-gamma-D-glutamyl-L-lysyl-D-alanyl-D-alanine + H2O = UDP-N-acetyl-alpha-D-muramoyl-L-alanyl-gamma-D-glutamyl-L-lysyl-D-alanine + D-alanine. In terms of biological role, bifunctional enzyme, exhibiting dipeptidase and carboxypeptidase activities. Catalyzes hydrolysis of the D-alanyl-D-alanine dipeptide. Cleaves the C-terminal D-alanine residue of UDP-muramyl-pentapeptide[Ala] (UDP-MurNAc-L-Ala-D-Glu-L-Lys-D-Ala-D-Ala). Shows no activity against the pentapeptide with a C-terminal D-serine residue. Together with VanC/VanC1 and VanT, required for vancomycin resistance in E.gallinarum strain BM4174. In Enterococcus gallinarum, this protein is Bifunctional D-Ala-D-Ala dipeptidase and D-Ala-D-Ala carboxypeptidase VanXYC.